The sequence spans 426 residues: D-tagatose-1,6-bisphosphate aldolase subunit KbaZ (426 aa).

The protein belongs to the GatZ/KbaZ family. KbaZ subfamily. Forms a complex with KbaY.

Its pathway is carbohydrate metabolism; D-tagatose 6-phosphate degradation; D-glyceraldehyde 3-phosphate and glycerone phosphate from D-tagatose 6-phosphate: step 2/2. Component of the tagatose-1,6-bisphosphate aldolase KbaYZ that is required for full activity and stability of the Y subunit. Could have a chaperone-like function for the proper and stable folding of KbaY. When expressed alone, KbaZ does not show any aldolase activity. The protein is D-tagatose-1,6-bisphosphate aldolase subunit KbaZ of Escherichia coli O6:K15:H31 (strain 536 / UPEC).